The primary structure comprises 284 residues: Tropomyosin alpha-1 chain (284 aa).

The interval 1–38 (MDAIKKKMQMLKLDKENALDRAEQAEADKKAAEERSKQ) is disordered. Residues 1 to 284 (MDAIKKKMQM…DHALNDMTSI (284 aa)) are a coiled coil. Basic and acidic residues predominate over residues 12–38 (KLDKENALDRAEQAEADKKAAEERSKQ).

Belongs to the tropomyosin family. In terms of assembly, homodimer. Heterodimer of an alpha (TPM1, TPM3 or TPM4) and a beta (TPM2) chain. Interacts with HRG (via the HRR domain); the interaction contributes to the antiangiogenic properties of the histidine/proline-rich region (HRR) of HRG.

The protein localises to the cytoplasm. Its subcellular location is the cytoskeleton. Its function is as follows. Binds to actin filaments in muscle and non-muscle cells. Plays a central role, in association with the troponin complex, in the calcium dependent regulation of vertebrate striated muscle contraction. Smooth muscle contraction is regulated by interaction with caldesmon. In non-muscle cells is implicated in stabilizing cytoskeleton actin filaments. This is Tropomyosin alpha-1 chain (TPM1) from Coturnix japonica (Japanese quail).